The chain runs to 492 residues: Variant surface glycoprotein MITAT 1.1 (492 aa).

The N-terminal stretch at 1–32 is a signal peptide; sequence MATGRAKNTKWARWLSTAGLIIVVTLPATTMA. Cystine bridges form between Cys-47-Cys-177 and Cys-155-Cys-222. N-linked (GlcNAc...) asparagine glycans are attached at residues Asn-298 and Asn-471. A lipid anchor (GPI-anchor amidated serine) is attached at Ser-475. A propeptide spans 476 to 492 (removed in mature form); that stretch reads NSFLIHKAPLLLAFLLF.

The protein localises to the cell membrane. Its function is as follows. VSG forms a coat on the surface of the parasite. The trypanosome evades the immune response of the host by expressing a series of antigenically distinct VSGs from an estimated 1000 VSG genes. The chain is Variant surface glycoprotein MITAT 1.1 from Trypanosoma brucei brucei.